The following is a 236-amino-acid chain: Phosphatidylserine decarboxylase proenzyme (236 aa).

Serine 203 functions as the Schiff-base intermediate with substrate; via pyruvic acid in the catalytic mechanism. Serine 203 is modified (pyruvic acid (Ser); by autocatalysis).

Belongs to the phosphatidylserine decarboxylase family. PSD-A subfamily. Heterodimer of a large membrane-associated beta subunit and a small pyruvoyl-containing alpha subunit. Pyruvate is required as a cofactor. In terms of processing, is synthesized initially as an inactive proenzyme. Formation of the active enzyme involves a self-maturation process in which the active site pyruvoyl group is generated from an internal serine residue via an autocatalytic post-translational modification. Two non-identical subunits are generated from the proenzyme in this reaction, and the pyruvate is formed at the N-terminus of the alpha chain, which is derived from the carboxyl end of the proenzyme. The post-translation cleavage follows an unusual pathway, termed non-hydrolytic serinolysis, in which the side chain hydroxyl group of the serine supplies its oxygen atom to form the C-terminus of the beta chain, while the remainder of the serine residue undergoes an oxidative deamination to produce ammonia and the pyruvoyl prosthetic group on the alpha chain.

It localises to the cell membrane. The catalysed reaction is a 1,2-diacyl-sn-glycero-3-phospho-L-serine + H(+) = a 1,2-diacyl-sn-glycero-3-phosphoethanolamine + CO2. Its pathway is phospholipid metabolism; phosphatidylethanolamine biosynthesis; phosphatidylethanolamine from CDP-diacylglycerol: step 2/2. Its function is as follows. Catalyzes the formation of phosphatidylethanolamine (PtdEtn) from phosphatidylserine (PtdSer). The polypeptide is Phosphatidylserine decarboxylase proenzyme (Saccharopolyspora erythraea (strain ATCC 11635 / DSM 40517 / JCM 4748 / NBRC 13426 / NCIMB 8594 / NRRL 2338)).